The primary structure comprises 185 residues: MISVNDFRTGLTIEVDGGIWRVVDFQHVKPGKGAAFVRSKLRNLRTGAIQEKTFRAGEKVAKAQIETKTMQYLYANGDQHVFMDTSSYEQLELNENQIEEELKYLLENMSVHIMMYQSETLGIELPNTVELKVVETEPGIKGDTASGGTKPAKTETGLVVNVPFFVNEGDTLVVNTSDGSYVSRA.

The protein belongs to the elongation factor P family.

It localises to the cytoplasm. Its pathway is protein biosynthesis; polypeptide chain elongation. Its function is as follows. Involved in peptide bond synthesis. Stimulates efficient translation and peptide-bond synthesis on native or reconstituted 70S ribosomes in vitro. Probably functions indirectly by altering the affinity of the ribosome for aminoacyl-tRNA, thus increasing their reactivity as acceptors for peptidyl transferase. This Bacillus velezensis (strain DSM 23117 / BGSC 10A6 / LMG 26770 / FZB42) (Bacillus amyloliquefaciens subsp. plantarum) protein is Elongation factor P.